We begin with the raw amino-acid sequence, 208 residues long: Small ribosomal subunit protein uS4 (208 aa).

The disordered stretch occupies residues 31–50 (SALDKRAYGPGQHGQRRTKT). Positions 98–161 (RRLDNVVYRM…KSNPQVVRAM (64 aa)) constitute an S4 RNA-binding domain.

Belongs to the universal ribosomal protein uS4 family. Part of the 30S ribosomal subunit. Contacts protein S5. The interaction surface between S4 and S5 is involved in control of translational fidelity.

One of the primary rRNA binding proteins, it binds directly to 16S rRNA where it nucleates assembly of the body of the 30S subunit. In terms of biological role, with S5 and S12 plays an important role in translational accuracy. This chain is Small ribosomal subunit protein uS4, found in Helicobacter pylori (strain J99 / ATCC 700824) (Campylobacter pylori J99).